Reading from the N-terminus, the 490-residue chain is Tryptophan 5-hydroxylase 2 (490 aa).

Ser-19 carries the post-translational modification Phosphoserine. The interval 34–62 (LTLNKANSGKNDDKGNKGSSKNETATESG) is disordered. Over residues 50–62 (KGSSKNETATESG) the composition is skewed to polar residues. In terms of domain architecture, ACT spans 65–140 (AVVFSLKNEV…TIVTLNPPEN (76 aa)). His-318, His-323, and Glu-363 together coordinate Fe cation.

It belongs to the biopterin-dependent aromatic amino acid hydroxylase family. Interacts with DNAJC12. Requires Fe(2+) as cofactor.

The catalysed reaction is (6R)-L-erythro-5,6,7,8-tetrahydrobiopterin + L-tryptophan + O2 = 5-hydroxy-L-tryptophan + (4aS,6R)-4a-hydroxy-L-erythro-5,6,7,8-tetrahydrobiopterin. It functions in the pathway aromatic compound metabolism; serotonin biosynthesis; serotonin from L-tryptophan: step 1/2. This Macaca mulatta (Rhesus macaque) protein is Tryptophan 5-hydroxylase 2 (TPH2).